The sequence spans 694 residues: Elongation factor G (694 aa).

The tr-type G domain maps to serine 9–lysine 288. Residues alanine 18 to threonine 25, aspartate 82 to histidine 86, and asparagine 136 to aspartate 139 each bind GTP.

The protein belongs to the TRAFAC class translation factor GTPase superfamily. Classic translation factor GTPase family. EF-G/EF-2 subfamily.

It is found in the cytoplasm. In terms of biological role, catalyzes the GTP-dependent ribosomal translocation step during translation elongation. During this step, the ribosome changes from the pre-translocational (PRE) to the post-translocational (POST) state as the newly formed A-site-bound peptidyl-tRNA and P-site-bound deacylated tRNA move to the P and E sites, respectively. Catalyzes the coordinated movement of the two tRNA molecules, the mRNA and conformational changes in the ribosome. This Chlamydia caviae (strain ATCC VR-813 / DSM 19441 / 03DC25 / GPIC) (Chlamydophila caviae) protein is Elongation factor G.